The sequence spans 514 residues: MALKCHLVLLAITLLLAQCSGSVDKKDSTTNHLDEKKTDSTEAHIVQETDALKENSYLGAEEESKEEDKKRSAAPQQPGLWGKRQKIGLWGRSADAGQPGLWGKRQSPGLWGRSADAGQPGLWGKRQNPGLWGRSADAGQPGLWGKRQNPGLWGRSADAGQPGLWGKRQNPGLWGRSADARQPGLWGKREIYALWGGKRQNPGLWGRSADPGQPGLWGKRELVGLWGGKRQNPGLWGRSAEAGQPGLWGKRQKIGLWGRSADPLQPGLWGKRQNPGLWGRSADPQQPGLWGKRQNPGLWGRSADPQQPGLWGKRQNPGLWGRSADPQQPGLWGKRQNPGLWGRSADPQQPGLWGKSPGLWGRSADPQQPGLWGKRQNPGFWGRSADPQQPGLWGKRQNPGLWGRSADPQQPGLWGKRQNPGLWGRSADPQQPGLWGKRQNPGLWGRSADPQQPGLWGKRQNPGLWGRSAGSGQLGLWGKRQSRIGLWGRSAEPPQFEDLEDLKKKSAIPQPKGQ.

The N-terminal stretch at 1 to 22 (MALKCHLVLLAITLLLAQCSGS) is a signal peptide. Over residues 23 to 53 (VDKKDSTTNHLDEKKTDSTEAHIVQETDALK) the composition is skewed to basic and acidic residues. The propeptide occupies 23–75 (VDKKDSTTNHLDEKKTDSTEAHIVQETDALKENSYLGAEEESKEEDKKRSAAP). The tract at residues 23 to 180 (VDKKDSTTNH…PGLWGRSADA (158 aa)) is disordered. Tryptophan amide is present on residues Trp81 and Trp90. Positions 93–97 (SADAG) are excised as a propeptide. Tryptophan amide is present on residues Trp102 and Trp111. A propeptide spanning residues 114 to 118 (SADAG) is cleaved from the precursor. Trp123 and Trp132 each carry tryptophan amide. A propeptide spanning residues 135-139 (SADAG) is cleaved from the precursor. Tryptophan amide occurs at positions 144 and 153. The propeptide occupies 156–160 (SADAG). Tryptophan amide occurs at positions 165 and 174. The propeptide occupies 177–181 (SADAR). Residue Trp186 is modified to Tryptophan amide. A propeptide spanning residues 190-199 (EIYALWGGKR) is cleaved from the precursor. Trp205 carries the post-translational modification Tryptophan amide. The propeptide occupies 208-212 (SADPG). Position 217 is a tryptophan amide (Trp217). The propeptide occupies 221 to 230 (ELVGLWGGKR). Trp236 is modified (tryptophan amide). Positions 239–243 (SAEAG) are excised as a propeptide. 2 positions are modified to tryptophan amide: Trp248 and Trp257. The segment at 258 to 475 (GRSADPLQPG…GRSAGSGQLG (218 aa)) is disordered. A propeptide spanning residues 260 to 264 (SADPL) is cleaved from the precursor. Tryptophan amide is present on residues Trp269 and Trp278. A propeptide spanning residues 281–284 (SADP) is cleaved from the precursor. Tryptophan amide is present on residues Trp290 and Trp299. Residues 302–305 (SADP) constitute a propeptide that is removed on maturation. Residues Trp311 and Trp320 each carry the tryptophan amide modification. A propeptide spanning residues 323-326 (SADP) is cleaved from the precursor. 2 positions are modified to tryptophan amide: Trp332 and Trp341. A propeptide spanning residues 344–347 (SADP) is cleaved from the precursor. Position 353 is a tryptophan amide (Trp353). A propeptide spanning residues 356–366 (SPGLWGRSADP) is cleaved from the precursor. A Tryptophan amide modification is found at Trp372. A propeptide spanning residues 376–387 (QNPGFWGRSADP) is cleaved from the precursor. A tryptophan amide mark is found at Trp393 and Trp402. Positions 405–408 (SADP) are excised as a propeptide. 2 positions are modified to tryptophan amide: Trp414 and Trp423. The propeptide occupies 426–429 (SADP). Tryptophan amide occurs at positions 435 and 444. Positions 447–450 (SADP) are excised as a propeptide. Residues Trp456 and Trp465 each carry the tryptophan amide modification. The propeptide occupies 468-472 (SAGSG). Trp477 and Trp487 each carry tryptophan amide. The segment at 489 to 514 (RSAEPPQFEDLEDLKKKSAIPQPKGQ) is disordered. Positions 490-514 (SAEPPQFEDLEDLKKKSAIPQPKGQ) are excised as a propeptide.

This sequence belongs to the LWamide neuropeptide family.

The protein localises to the secreted. In terms of biological role, metamorphosin A may be part of an internal signaling system involved in control of metamorphosis. The sequence is that of LWamide neuropeptides from Anthopleura elegantissima (Green aggregating anemone).